A 231-amino-acid chain; its full sequence is U1 small nuclear ribonucleoprotein C-1 (231 aa).

A Matrin-type zinc finger spans residues 4–36 (YYCDYCDTYLTHDSPSVRKQHNAGYKHKANVRT). Composition is skewed to pro residues over residues 117–127 (APGIPGYPGGP), 134–159 (GAPP…PPGS), and 167–178 (LPRPPTLPPPTS). The interval 117-231 (APGIPGYPGG…SYAQPSEGNH (115 aa)) is disordered. Over residues 181 to 193 (PGAPIPNSAAPPA) the composition is skewed to low complexity. Positions 199–217 (PPAPAGPTSGAPPAPPTAP) are enriched in pro residues.

It belongs to the U1 small nuclear ribonucleoprotein C family. U1 snRNP is composed of the 7 core Sm proteins B/B', D1, D2, D3, E, F and G that assemble in a heptameric protein ring on the Sm site of the small nuclear RNA to form the core snRNP, and at least 3 U1 snRNP-specific proteins U1-70K, U1-A and U1-C. U1-C interacts with U1 snRNA and the 5' splice-site region of the pre-mRNA.

The protein localises to the nucleus. Functionally, component of the spliceosomal U1 snRNP, which is essential for recognition of the pre-mRNA 5' splice-site and the subsequent assembly of the spliceosome. U1-C is directly involved in initial 5' splice-site recognition for both constitutive and regulated alternative splicing. The interaction with the 5' splice-site seems to precede base-pairing between the pre-mRNA and the U1 snRNA. Stimulates commitment or early (E) complex formation by stabilizing the base pairing of the 5' end of the U1 snRNA and the 5' splice-site region. In Sorghum bicolor (Sorghum), this protein is U1 small nuclear ribonucleoprotein C-1.